The primary structure comprises 241 residues: Uracil-DNA glycosylase (241 aa).

The active-site Proton acceptor is D71. The segment at 221–241 (ISPIDWSLPPRNELDTTSAGA) is disordered.

It belongs to the uracil-DNA glycosylase (UDG) superfamily. UNG family.

The protein localises to the cytoplasm. It carries out the reaction Hydrolyzes single-stranded DNA or mismatched double-stranded DNA and polynucleotides, releasing free uracil.. Functionally, excises uracil residues from the DNA which can arise as a result of misincorporation of dUMP residues by DNA polymerase or due to deamination of cytosine. The chain is Uracil-DNA glycosylase from Xanthomonas oryzae pv. oryzae (strain MAFF 311018).